The sequence spans 925 residues: MTLNNLQALLRRVAAREDSGHVVVYGMGNTKAFKSYSYQDLLRVAIKASVALRKTSDLHPGSVILLHFDNHWDNIVWFWAASFAGCLPAISASFSNDASQRTAHIERLSTTLMHPLCLTNERIMADFAGQDAVQPLAVETLVLNGDVSFEALPQEHPEPSLSDDALLLFTSGSSGNSKGVCLSHGQILASISGKYAVRPLPDNTSFLNWVGLDHVAAIVEIHLQAMYALKTQVHVPAADILSSPATFLQLLEKHRVSRTFAPNFFLAKLRDLLQENDSLPEPRRWDLRSLEYVASGGEANVTKTCDRLSEYLVAFGAPKDVIVPGFGMTETCAGSIFNTRCPEYDKSRSAEFASVGTCMPGISMRVTDLSNNALPSGEIGHLQLTGPVVFKRYFNNTSATQEAFTPDGWFKTGDMGCIDENGCLTLTGRAKENMIINGVNHSPHEIETALDKIPGLTPSYSCCFSFFPSGGETEEICVVYLPTYSPDDLAARAQTADAISKTVLMSTGSRPHVLPLEREALPKSSLGKLSRAKIKAAYEKGEYATYQNANNELMRRYRESTRAEPQNDLEKTLLEVFTRSLSITDDAFDVKTPIFDVGINSVELIRLKRDIEDHLGMAASAIPMIMLMTHSTVRDLATALEKLQGPREYDPVVTLQSHGHKNPLWLVHPGAGEVLVFINLAQYIVDRPVYALRARGFNDGEQPFETIEEATASYYNGIRSRQPHGPYALAGYCYGSMLAFEVAKMLESHGEEVRFLGSFNLPPHIKMRMRELDWKECLLHLAYFLDLVSQERSREMSVELAGLSHDEILDSVIQNANMERYAELSLNRPLLVRWADVAYELHRMAFDYDPAGCVAGMDVFFSIPLAIAAASKTEWRNVHLSQWEDFTRTVPKFHDVAGEHYSMIGPDHVFSFQKTLRKALDERGM.

The tract at residues alanine 15–isoleucine 436 is adenylation (A) domain. One can recognise a Carrier domain in the interval glutamate 564–glutamine 644. Serine 601 bears the O-(pantetheine 4'-phosphoryl)serine mark. The interval proline 663–valine 909 is thioesterase (TE) domain.

This sequence belongs to the NRP synthetase family. In terms of tissue distribution, apvA specifically produces aspulvinone E in hyphea, in contrast to melA which produces aspulvinone E in conidia where it is converted to UV-protective Asp-melanin.

It catalyses the reaction 2 3-(4-hydroxyphenyl)pyruvate + AH2 + 2 ATP + O2 = aspulvinone E + A + 2 AMP + CO2 + 2 diphosphate + H2O + H(+). The protein operates within secondary metabolite biosynthesis. Its function is as follows. Nonribosomal peptide synthetase; part of the gene cluster that mediates the biosynthesis of aspulvinones. The nonribosomal peptide synthetase apvA is responsible for the production of aspulvinone E, the core structure of aspulvinones. ApvA first activates 4-hydroxyphenylpyruvate (HPPA) through its A domain to AMP-HPPA. The HPPA unit is then loaded to the T domain and eventually transferred to the TE domain. Upon loading of another HPPA unit to the T domain, the TE domain promotes the enolate formation on the unit attached. The next step involves head to tail Claisen condensation, followed by the keto-enol tautermerization and a nucleophilic attack on the carbonyl carbon to yield the furanone partial structure. A spontaneous oxidation at the beta-carbon of the thioester might occur in aerobic condition. The TE domain then catalyzes the hydrolysis of the thioester, followed by spontaneous decarboxylation, dehydroxylation and keto-enol tautermerization to give the aspulvinone core. Aspulvinone E is highly unstable and converted to isoaspulvinone E in the presence of light. The structural diversity of the aspulvinones suggests that other tailoring enzymes are involved and have still to be identified. The sequence is that of Nonribosomal peptide synthetase apvA from Aspergillus terreus (strain NIH 2624 / FGSC A1156).